The primary structure comprises 713 residues: Ribosomal RNA large subunit methyltransferase K/L (713 aa).

Residues 43 to 154 (LAYRITLWTR…NGVITIAMNF (112 aa)) form the THUMP domain.

Belongs to the methyltransferase superfamily. RlmKL family.

It localises to the cytoplasm. It catalyses the reaction guanosine(2445) in 23S rRNA + S-adenosyl-L-methionine = N(2)-methylguanosine(2445) in 23S rRNA + S-adenosyl-L-homocysteine + H(+). The catalysed reaction is guanosine(2069) in 23S rRNA + S-adenosyl-L-methionine = N(2)-methylguanosine(2069) in 23S rRNA + S-adenosyl-L-homocysteine + H(+). Specifically methylates the guanine in position 2445 (m2G2445) and the guanine in position 2069 (m7G2069) of 23S rRNA. The chain is Ribosomal RNA large subunit methyltransferase K/L from Shewanella sp. (strain MR-7).